The following is a 178-amino-acid chain: Adenine phosphoribosyltransferase (178 aa).

It belongs to the purine/pyrimidine phosphoribosyltransferase family. In terms of assembly, homodimer.

Its subcellular location is the cytoplasm. It carries out the reaction AMP + diphosphate = 5-phospho-alpha-D-ribose 1-diphosphate + adenine. Its pathway is purine metabolism; AMP biosynthesis via salvage pathway; AMP from adenine: step 1/1. In terms of biological role, catalyzes a salvage reaction resulting in the formation of AMP, that is energically less costly than de novo synthesis. This Cereibacter sphaeroides (strain KD131 / KCTC 12085) (Rhodobacter sphaeroides) protein is Adenine phosphoribosyltransferase.